Here is an 86-residue protein sequence, read N- to C-terminus: Kappa-theraphotoxin-Cg1a 5 (86 aa).

Positions 1–21 (MKVSVLITLAVLGVMFVWTSA) are cleaved as a signal peptide. Residues 22–50 (AELEERGSDQRDSPAWLKSMERIFQSEER) constitute a propeptide that is removed on maturation. Cystine bridges form between Cys-52–Cys-66, Cys-59–Cys-71, and Cys-65–Cys-78. Phenylalanine amide is present on Phe-84.

It belongs to the neurotoxin 10 (Hwtx-1) family. 28 (Jztx-11) subfamily. In terms of tissue distribution, expressed by the venom gland.

It localises to the secreted. Its function is as follows. This toxin acts as a voltage-dependent gating-modifier. It inhibits the sodium conductance (IC(50)=124 nM) and slows the fast inactivation (EC(50)=1180 nM) of Nav1.5/SCN5A. It significantly shifts the activation to more depolarized voltages and decreases the deactivation of Nav1.5 currents upon extreme depolarization, but only slightly affects voltage-dependence of steady-state inactivation. In addition, this toxin causes an approximately five-fold decrease in the rate of recovery from inactivation and an approximately 1.9-fold reduction in the closed-state inactivation rate. This toxin integrates the functions of site 3 toxins (alpha-scorpion toxins) with site 4 toxins (beta-scorpion and spider toxins) by targeting multiple sites on Nav1.5. Also shows inhibition of voltage-gated potassium channels (5 uM completely inhibits Kv2.1/KCNB1, whereas 5 uM moderately inhibits Kv4.2/KCND2 Kv4.1/KCND1 channels). This Chilobrachys guangxiensis (Chinese earth tiger tarantula) protein is Kappa-theraphotoxin-Cg1a 5.